A 30-amino-acid chain; its full sequence is Cyclotide hyen-E (30 aa).

The cyclopeptide (Gly-Asn) cross-link spans 1–30 (GVPCGESCVYIPCFTGIINCSCRDKVCYNN). 3 cysteine pairs are disulfide-bonded: Cys4-Cys20, Cys8-Cys22, and Cys13-Cys27.

In terms of processing, this is a cyclic peptide. Detected in stems (at protein level).

Its function is as follows. Probably participates in a plant defense mechanism. Has cytotoxic activity against HUVEC cells (LC(50)= 2.17 uM) and various cancer cells including HeLa (LC(50)= 3.05 uM), MCF-7 and K562. Displays very weak hemolytic activity. Binds to and induces leakage in phospholipd membranes, particularly ones containing 1-palmitoyl-2-oleophosphatidylethanolamine (POPE). The polypeptide is Cyclotide hyen-E (Pigea enneasperma (Spade flower)).